Consider the following 308-residue polypeptide: MYYNHKNVLDTEQFSKPDLDFLIGKIRVMERLVEQNKAFGILTGKLLASLFFEASTRTRLSFEAAMERLGGRVISTVGFQFSSISKGETLYDTMKMVEAYADIAVIRHPVEGSSRIAAGAVKIPVINAGDGAGQHPTQAILDLYTIISEKGTLDGLTVAFIGDLKYGRTIHSLINLLRHYKVRLFLISPPELALPESYKKALQGYSLTLEETTDIKAVWDCDVAYVTRIQEERFPDHKEYERLKDLFKINKELILASKKETTVLHPLPRVNELSTDVDDLPNAAYFRQARYGVVSRMTLLCLSLGQDF.

Residues R57 and T58 each coordinate carbamoyl phosphate. Residue K86 coordinates L-aspartate. Residues R107, H135, and Q138 each coordinate carbamoyl phosphate. L-aspartate contacts are provided by R168 and R228. Positions 267 and 268 each coordinate carbamoyl phosphate.

The protein belongs to the aspartate/ornithine carbamoyltransferase superfamily. ATCase family. Heterododecamer (2C3:3R2) of six catalytic PyrB chains organized as two trimers (C3), and six regulatory PyrI chains organized as three dimers (R2).

It carries out the reaction carbamoyl phosphate + L-aspartate = N-carbamoyl-L-aspartate + phosphate + H(+). The protein operates within pyrimidine metabolism; UMP biosynthesis via de novo pathway; (S)-dihydroorotate from bicarbonate: step 2/3. Catalyzes the condensation of carbamoyl phosphate and aspartate to form carbamoyl aspartate and inorganic phosphate, the committed step in the de novo pyrimidine nucleotide biosynthesis pathway. The chain is Aspartate carbamoyltransferase catalytic subunit from Leptospira interrogans serogroup Icterohaemorrhagiae serovar Lai (strain 56601).